The primary structure comprises 691 residues: Pleckstrin homology domain-containing family G member 7 (691 aa).

2 disordered regions span residues 1 to 48 and 109 to 140; these read MEKT…ISTS and TSEP…LQPV. One can recognise a DH domain in the interval 313-488; that stretch reads MIFMNTLRYL…EGKVKWLDNF (176 aa). Asn-395 carries N-linked (GlcNAc...) asparagine glycosylation. One can recognise a PH domain in the interval 535-668; it reads HLLYEGKLTL…WMAQITTAIS (134 aa).

The protein is Pleckstrin homology domain-containing family G member 7 of Homo sapiens (Human).